Reading from the N-terminus, the 457-residue chain is C4-dicarboxylate transport protein (457 aa).

7 helical membrane passes run 20–42 (LYFQ…PAFA), 51–73 (AFIK…TGIA), 88–110 (AMAY…AHVV), 138–158 (LTLV…AFTG), 166–188 (LTGP…LALV), 212–234 (ILMR…KYGV), and 241–263 (AWLV…GLVS).

This sequence belongs to the dicarboxylate/amino acid:cation symporter (DAACS) (TC 2.A.23) family.

Its subcellular location is the cell inner membrane. Responsible for the transport of dicarboxylates such as succinate, fumarate, and malate from the periplasm across the membrane. This chain is C4-dicarboxylate transport protein, found in Xanthomonas axonopodis pv. citri (strain 306).